A 424-amino-acid chain; its full sequence is Serine--tRNA ligase (424 aa).

233–235 (TAE) provides a ligand contact to L-serine. ATP is bound at residue 264–266 (RRE). Position 287 (Glu287) interacts with L-serine. An ATP-binding site is contributed by 351–354 (EISS). Position 387 (Ser387) interacts with L-serine.

Belongs to the class-II aminoacyl-tRNA synthetase family. Type-1 seryl-tRNA synthetase subfamily. Homodimer. The tRNA molecule binds across the dimer.

It is found in the cytoplasm. The catalysed reaction is tRNA(Ser) + L-serine + ATP = L-seryl-tRNA(Ser) + AMP + diphosphate + H(+). It catalyses the reaction tRNA(Sec) + L-serine + ATP = L-seryl-tRNA(Sec) + AMP + diphosphate + H(+). Its pathway is aminoacyl-tRNA biosynthesis; selenocysteinyl-tRNA(Sec) biosynthesis; L-seryl-tRNA(Sec) from L-serine and tRNA(Sec): step 1/1. In terms of biological role, catalyzes the attachment of serine to tRNA(Ser). Is also able to aminoacylate tRNA(Sec) with serine, to form the misacylated tRNA L-seryl-tRNA(Sec), which will be further converted into selenocysteinyl-tRNA(Sec). The protein is Serine--tRNA ligase of Acaryochloris marina (strain MBIC 11017).